Consider the following 105-residue polypeptide: Large ribosomal subunit protein uL24 (105 aa).

Residues 75–105 (DSDGNPTRVGYRTDEESGKRVRISRKNGKDI) form a disordered region. The segment covering 94–105 (RVRISRKNGKDI) has biased composition (basic residues).

The protein belongs to the universal ribosomal protein uL24 family. In terms of assembly, part of the 50S ribosomal subunit.

One of two assembly initiator proteins, it binds directly to the 5'-end of the 23S rRNA, where it nucleates assembly of the 50S subunit. Functionally, one of the proteins that surrounds the polypeptide exit tunnel on the outside of the subunit. The polypeptide is Large ribosomal subunit protein uL24 (Rhodococcus jostii (strain RHA1)).